The chain runs to 97 residues: Aspartyl/glutamyl-tRNA(Asn/Gln) amidotransferase subunit C (97 aa).

This sequence belongs to the GatC family. Heterotrimer of A, B and C subunits.

The enzyme catalyses L-glutamyl-tRNA(Gln) + L-glutamine + ATP + H2O = L-glutaminyl-tRNA(Gln) + L-glutamate + ADP + phosphate + H(+). It catalyses the reaction L-aspartyl-tRNA(Asn) + L-glutamine + ATP + H2O = L-asparaginyl-tRNA(Asn) + L-glutamate + ADP + phosphate + 2 H(+). Allows the formation of correctly charged Asn-tRNA(Asn) or Gln-tRNA(Gln) through the transamidation of misacylated Asp-tRNA(Asn) or Glu-tRNA(Gln) in organisms which lack either or both of asparaginyl-tRNA or glutaminyl-tRNA synthetases. The reaction takes place in the presence of glutamine and ATP through an activated phospho-Asp-tRNA(Asn) or phospho-Glu-tRNA(Gln). This chain is Aspartyl/glutamyl-tRNA(Asn/Gln) amidotransferase subunit C, found in Roseiflexus sp. (strain RS-1).